A 305-amino-acid chain; its full sequence is Thyroxine 5-deiodinase (305 aa).

The Cytoplasmic portion of the chain corresponds to 1–43 (MPGQAGRRRLVGGGCRGSQGPLGGAATMLRSLLLHSLRLCAQT). The helical; Signal-anchor for type II membrane protein transmembrane segment at 44–63 (ASCLVLFPRFLGTACMLWLL) threads the bilayer. Residues 64 to 305 (DFLCIRKHLL…QLHGPQPRRV (242 aa)) lie on the Extracellular side of the membrane. Residues 79 to 98 (GEPETEVELNSDGDEVPPDD) form a disordered region. Over residues 82–96 (ETEVELNSDGDEVPP) the composition is skewed to acidic residues. Residue Sec-171 is part of the active site. Position 171 (Sec-171) is a non-standard amino acid, selenocysteine.

This sequence belongs to the iodothyronine deiodinase family. Monomer. Homodimer. May undergo minor heretodimerization with DIO1 and DIO2. In terms of tissue distribution, expressed in brain only.

It localises to the cell membrane. The protein resides in the endosome membrane. The enzyme catalyses 3,3',5'-triiodo-L-thyronine + iodide + A + H(+) = L-thyroxine + AH2. It carries out the reaction 3,3'-diiodo-L-thyronine + iodide + A + H(+) = 3,3',5-triiodo-L-thyronine + AH2. The catalysed reaction is 3-iodo-L-thyronine + iodide + A + H(+) = 3,5-diiodo-L-thyronine + AH2. It catalyses the reaction L-thyronine + iodide + A + H(+) = 3-iodo-L-thyronine + AH2. The enzyme catalyses 3',5'-diiodo-L-thyronine + iodide + A + H(+) = 3,3',5'-triiodo-L-thyronine + AH2. It carries out the reaction 3'-iodo-L-thyronine + iodide + A + H(+) = 3,3'-diiodo-L-thyronine + AH2. The catalysed reaction is 3,3',5'-triiodothyronamine + iodide + A + H(+) = 3,3',5,5'-tetraiodothyronamine + AH2. It catalyses the reaction 3',5'-diiodothyronamine + iodide + A + H(+) = 3,3',5'-triiodothyronamine + AH2. The enzyme catalyses 3,3'-diiodothyronamine + iodide + A + H(+) = 3,3',5-triiodothyronamine + AH2. It carries out the reaction 3-iodothyronamine + iodide + A + H(+) = 3,5-diiodothyronamine + AH2. The catalysed reaction is 3'-iodothyronamine + iodide + A + H(+) = 3,3'-diiodothyronamine + AH2. It catalyses the reaction thyronamine + iodide + A + H(+) = 3-iodothyronamine + AH2. Functionally, plays a crucial role in the metabolism of thyroid hormones (TH) and has specific roles in TH activation and inactivation by deiodination, particularly in different tissues. Catalyzes the deiodination of L-thyroxine (T4) to 3,3',5'-triiodothyronine (rT3), 3,5-diiodothyronine (3,5-T2) to 3-monoiodothyronine (3-T1), rT3 to 3',5'-diiodothyronine (3',5'-T2) and 3,3'-diiodothyronine (3,3'-T2) to 3'-monoiodothyronine (3'-T1) via inner-ring deiodination (IRD). Catalyzes the deiodination of 3,5,3'-triiodothyronine (T3) to 3,3'-diiodothyronine (3,3'-T2) via IRD. Catalyzes the deiodination of 3-T1 to L-thyronine (T0) via outer-ring deiodination (ORD). Catalyzes the tyrosyl ring deiodinations of 3,3',5,5'-tetraiodothyronamine, 3,3',5'-triiodothyronamine, 3,5,3'-triiodothyronamine, 3,5-diiodothyronamine, 3,3'-diiodothyronamine and 3-iodothyronamine. The polypeptide is Thyroxine 5-deiodinase (DIO3) (Sus scrofa (Pig)).